Reading from the N-terminus, the 258-residue chain is Imidazole glycerol phosphate synthase subunit HisF (258 aa).

Active-site residues include Asp-11 and Asp-130.

This sequence belongs to the HisA/HisF family. In terms of assembly, heterodimer of HisH and HisF.

The protein resides in the cytoplasm. The catalysed reaction is 5-[(5-phospho-1-deoxy-D-ribulos-1-ylimino)methylamino]-1-(5-phospho-beta-D-ribosyl)imidazole-4-carboxamide + L-glutamine = D-erythro-1-(imidazol-4-yl)glycerol 3-phosphate + 5-amino-1-(5-phospho-beta-D-ribosyl)imidazole-4-carboxamide + L-glutamate + H(+). It functions in the pathway amino-acid biosynthesis; L-histidine biosynthesis; L-histidine from 5-phospho-alpha-D-ribose 1-diphosphate: step 5/9. Functionally, IGPS catalyzes the conversion of PRFAR and glutamine to IGP, AICAR and glutamate. The HisF subunit catalyzes the cyclization activity that produces IGP and AICAR from PRFAR using the ammonia provided by the HisH subunit. This is Imidazole glycerol phosphate synthase subunit HisF from Klebsiella pneumoniae (strain 342).